Here is a 928-residue protein sequence, read N- to C-terminus: DNA polymerase I (928 aa).

Residues Met-1 to Thr-323 enclose the 5'-3' exonuclease domain. One can recognise a 3'-5' exonuclease domain in the interval Val-324–Gln-517. Positions Val-324–His-928 are klenow fragment. Residues Gly-521–His-928 form a polymerase region.

It belongs to the DNA polymerase type-A family. Single-chain monomer with multiple functions.

The catalysed reaction is DNA(n) + a 2'-deoxyribonucleoside 5'-triphosphate = DNA(n+1) + diphosphate. In addition to polymerase activity, this DNA polymerase exhibits 3'-5' and 5'-3' exonuclease activity. It is able to utilize nicked circular duplex DNA as a template and can unwind the parental DNA strand from its template. Functionally, genetic interactions among priB, dam, lexA, nagC, polA, rdgB, rdgB, rep and uup link the PriA-PriB replication restart pathway to DNA double-strand break repair. The chain is DNA polymerase I (polA) from Escherichia coli (strain K12).